The following is a 269-amino-acid chain: Peptide deformylase 1B, chloroplastic (269 aa).

The N-terminal 51 residues, 1-51 (MAARLHLRLGPRLRGFASSFAPLLAAHPRALPLSRMGSVAPLAAARARRGF), are a transit peptide targeting the chloroplast. The Fe cation site is built by cysteine 168 and histidine 210. The active site involves glutamate 211. A Fe cation-binding site is contributed by histidine 214.

It belongs to the polypeptide deformylase family. Homodimer. It depends on Fe(2+) as a cofactor. Mainly expressed in mature leaves and sheaths.

It is found in the plastid. Its subcellular location is the chloroplast stroma. The protein localises to the mitochondrion. The enzyme catalyses N-terminal N-formyl-L-methionyl-[peptide] + H2O = N-terminal L-methionyl-[peptide] + formate. Inhibited by actinonin. Functionally, removes the formyl group from the N-terminal Met of newly synthesized proteins. This is Peptide deformylase 1B, chloroplastic (PDF1B) from Oryza sativa subsp. japonica (Rice).